A 156-amino-acid chain; its full sequence is Ribosome maturation factor RimP (156 aa).

This sequence belongs to the RimP family.

It localises to the cytoplasm. In terms of biological role, required for maturation of 30S ribosomal subunits. In Anoxybacillus flavithermus (strain DSM 21510 / WK1), this protein is Ribosome maturation factor RimP.